Consider the following 211-residue polypeptide: FMN-dependent NADH:quinone oxidoreductase 3 (211 aa).

FMN is bound at residue 102–105; it reads MWNF.

Belongs to the azoreductase type 1 family. Homodimer. FMN is required as a cofactor.

It carries out the reaction 2 a quinone + NADH + H(+) = 2 a 1,4-benzosemiquinone + NAD(+). The enzyme catalyses N,N-dimethyl-1,4-phenylenediamine + anthranilate + 2 NAD(+) = 2-(4-dimethylaminophenyl)diazenylbenzoate + 2 NADH + 2 H(+). Its function is as follows. Quinone reductase that provides resistance to thiol-specific stress caused by electrophilic quinones. Functionally, also exhibits azoreductase activity. Catalyzes the reductive cleavage of the azo bond in aromatic azo compounds to the corresponding amines. This chain is FMN-dependent NADH:quinone oxidoreductase 3, found in Bacillus anthracis.